The chain runs to 475 residues: Ankyrin repeat, SAM and basic leucine zipper domain-containing protein 1 (475 aa).

The disordered stretch occupies residues 1-24 (MAAGTVRGLAVAGGGESSESEDDG). Phosphoserine is present on residues Ser-17, Ser-18, and Ser-20. 6 ANK repeats span residues 45–74 (EKNE…SVDS), 78–107 (YGWT…NASF), 110–144 (DKQT…DPNV), 148–177 (RLMT…EVNA), 181–210 (NGYT…NKML), and 214–243 (DGKT…PLEG). An SAM domain is found at 272 to 334 (SYTAFGDLEI…KILAALKELE (63 aa)).

As to quaternary structure, interacts with DDX4, PIWIL1, RANBP9 and TDRD1.

The protein localises to the cytoplasm. Functionally, plays a central role during spermatogenesis by repressing transposable elements and preventing their mobilization, which is essential for the germline integrity. Acts via the piRNA metabolic process, which mediates the repression of transposable elements during meiosis by forming complexes composed of piRNAs and Piwi proteins and governs the methylation and subsequent repression of transposons. Its association with pi-bodies suggests a participation in the primary piRNAs metabolic process. Required prior to the pachytene stage to facilitate the production of multiple types of piRNAs, including those associated with repeats involved in the regulation of retrotransposons. May act by mediating protein-protein interactions during germ cell maturation. This Neofelis nebulosa (Clouded leopard) protein is Ankyrin repeat, SAM and basic leucine zipper domain-containing protein 1 (ASZ1).